A 158-amino-acid chain; its full sequence is Cysteine-rich venom protein VAR7 (158 aa).

An N-terminal signal peptide occupies residues 1-22 (MILLKLYLTLAAILCQSRGTTS). Residues 41 to 158 (NKHNDLRRTV…MGCAINLCPN (118 aa)) form the SCP domain. The cysteines at positions 77 and 156 are disulfide-linked.

This sequence belongs to the CRISP family. Contains 8 disulfide bonds. As to expression, expressed by the venom gland.

Its subcellular location is the secreted. In terms of biological role, blocks ryanodine receptors, and potassium channels. This Varanus acanthurus (Ridge-tailed monitor) protein is Cysteine-rich venom protein VAR7.